Here is a 277-residue protein sequence, read N- to C-terminus: Large ribosomal subunit protein uL2 (277 aa).

Residues 222–277 (GVTMNPVDHPHGGGEGRTSGGRHPVTPWGKPTKGKKTRSNKSTNKFILISRHKRKK) form a disordered region.

Belongs to the universal ribosomal protein uL2 family. As to quaternary structure, part of the 50S ribosomal subunit. Forms a bridge to the 30S subunit in the 70S ribosome.

Its function is as follows. One of the primary rRNA binding proteins. Required for association of the 30S and 50S subunits to form the 70S ribosome, for tRNA binding and peptide bond formation. It has been suggested to have peptidyltransferase activity; this is somewhat controversial. Makes several contacts with the 16S rRNA in the 70S ribosome. This chain is Large ribosomal subunit protein uL2, found in Rhodopseudomonas palustris (strain BisB18).